Reading from the N-terminus, the 424-residue chain is GTPase Obg (424 aa).

Positions methionine 1 to leucine 158 constitute an Obg domain. The region spanning alanine 159–proline 329 is the OBG-type G domain. GTP-binding positions include glycine 165–serine 172, phenylalanine 190–valine 194, aspartate 212–glycine 215, asparagine 282–aspartate 285, and serine 310–alanine 312. Residues serine 172 and threonine 192 each coordinate Mg(2+). One can recognise an OCT domain in the interval threonine 347–glutamate 424.

The protein belongs to the TRAFAC class OBG-HflX-like GTPase superfamily. OBG GTPase family. Monomer. The cofactor is Mg(2+).

The protein localises to the cytoplasm. In terms of biological role, an essential GTPase which binds GTP, GDP and possibly (p)ppGpp with moderate affinity, with high nucleotide exchange rates and a fairly low GTP hydrolysis rate. Plays a role in control of the cell cycle, stress response, ribosome biogenesis and in those bacteria that undergo differentiation, in morphogenesis control. This Desulfitobacterium hafniense (strain DSM 10664 / DCB-2) protein is GTPase Obg.